The chain runs to 318 residues: Homoserine kinase (318 aa).

97–107 (PIGSGLGSSAC) is a binding site for ATP.

The protein belongs to the GHMP kinase family. Homoserine kinase subfamily.

The protein resides in the cytoplasm. The enzyme catalyses L-homoserine + ATP = O-phospho-L-homoserine + ADP + H(+). Its pathway is amino-acid biosynthesis; L-threonine biosynthesis; L-threonine from L-aspartate: step 4/5. Its function is as follows. Catalyzes the ATP-dependent phosphorylation of L-homoserine to L-homoserine phosphate. This chain is Homoserine kinase, found in Vibrio cholerae serotype O1 (strain M66-2).